The sequence spans 134 residues: Complexin-1 (134 aa).

2 disordered regions span residues 1 to 60 (MEFV…AERE) and 74 to 114 (KKEE…EEDE). A compositionally biased stretch (basic and acidic residues) spans 15 to 60 (DMGKMLGGDEEKDPDAAKKEEERQEALRQAEEERKAKYAKMEAERE). A coiled-coil region spans residues 29 to 64 (DAAKKEEERQEALRQAEEERKAKYAKMEAEREVMRQ). The tract at residues 48–70 (RKAKYAKMEAEREVMRQGIRDKY) is interaction with the SNARE complex.

The protein belongs to the complexin/synaphin family. Binds to the SNARE core complex containing SNAP25, VAMP2 and STX1A. As to expression, nervous system, and pancreatic islet cells. Present in many brain regions, including hippocampus and cerebellum. In the retina, present at conventional amacrine cell synapses (at protein level).

It localises to the cytoplasm. Its subcellular location is the cytosol. The protein localises to the perikaryon. The protein resides in the presynapse. Functionally, positively regulates a late step in exocytosis of various cytoplasmic vesicles, such as synaptic vesicles and other secretory vesicles. Organizes the SNAREs into a cross-linked zigzag topology that, when interposed between the vesicle and plasma membranes, is incompatible with fusion, thereby preventing SNAREs from releasing neurotransmitters until an action potential arrives at the synapse. Also involved in glucose-induced secretion of insulin by pancreatic beta-cells. Essential for motor behavior. The polypeptide is Complexin-1 (Cplx1) (Mus musculus (Mouse)).